The primary structure comprises 173 residues: Crossover junction endodeoxyribonuclease RuvC (173 aa).

Residues Asp8, Glu67, and Asp139 contribute to the active site. The Mg(2+) site is built by Asp8, Glu67, and Asp139.

Belongs to the RuvC family. Homodimer which binds Holliday junction (HJ) DNA. The HJ becomes 2-fold symmetrical on binding to RuvC with unstacked arms; it has a different conformation from HJ DNA in complex with RuvA. In the full resolvosome a probable DNA-RuvA(4)-RuvB(12)-RuvC(2) complex forms which resolves the HJ. Mg(2+) serves as cofactor.

Its subcellular location is the cytoplasm. It carries out the reaction Endonucleolytic cleavage at a junction such as a reciprocal single-stranded crossover between two homologous DNA duplexes (Holliday junction).. The RuvA-RuvB-RuvC complex processes Holliday junction (HJ) DNA during genetic recombination and DNA repair. Endonuclease that resolves HJ intermediates. Cleaves cruciform DNA by making single-stranded nicks across the HJ at symmetrical positions within the homologous arms, yielding a 5'-phosphate and a 3'-hydroxyl group; requires a central core of homology in the junction. The consensus cleavage sequence is 5'-(A/T)TT(C/G)-3'. Cleavage occurs on the 3'-side of the TT dinucleotide at the point of strand exchange. HJ branch migration catalyzed by RuvA-RuvB allows RuvC to scan DNA until it finds its consensus sequence, where it cleaves and resolves the cruciform DNA. This is Crossover junction endodeoxyribonuclease RuvC from Psychromonas ingrahamii (strain DSM 17664 / CCUG 51855 / 37).